Consider the following 430-residue polypeptide: Keratin, type I cytoskeletal 18 (430 aa).

Residue S2 is modified to N-acetylserine. The tract at residues 2–79 is head; the sequence is SFTTRSTFST…GLAGMGGIQN (78 aa). A phosphoserine mark is found at S7, S10, S15, and S18. A phosphoserine; alternate mark is found at S30 and S31. O-linked (GlcNAc) serine; alternate glycosylation is found at S30 and S31. S34 bears the Phosphoserine; by CDK1 mark. Residue Y36 is modified to Phosphotyrosine. S42 carries the phosphoserine modification. Omega-N-methylarginine is present on R45. S49 carries the post-translational modification Phosphoserine; alternate. O-linked (GlcNAc) serine; alternate glycosylation is present at S49. S51 carries the post-translational modification Phosphoserine; by MAPKAPK2 and MAPKAPK3. At T52 the chain carries Phosphothreonine. At S53 the chain carries Phosphoserine; by CAMK, PKC/PRKCE and AURKA. R55 is modified (omega-N-methylarginine). S60 is modified (phosphoserine). The residue at position 65 (T65) is a Phosphothreonine. A necessary for interaction with PNN region spans residues 70 to 373; sequence GLAGMGGIQN…EALLNIKVKL (304 aa). The tract at residues 77 to 128 is interaction with TRADD; the sequence is IQNEKETMQSLNDRLASYLDRVRSLETENRRLESKIREHLEKKGPQVRDWSH. Residues 80-115 are coil 1A; the sequence is EKETMQSLNDRLASYLDRVRSLETENRRLESKIREH. The region spanning 80–391 is the IF rod domain; it reads EKETMQSLND…RLLEDGEDFN (312 aa). K81 participates in a covalent cross-link: Glycyl lysine isopeptide (Lys-Gly) (interchain with G-Cter in SUMO2). Phosphoserine occurs at positions 93 and 100. Residues 116–132 are linker 1; sequence LEKKGPQVRDWSHYFKI. K131 carries the N6-acetyllysine modification. The interval 133-224 is coil 1B; the sequence is IEDLRAQIFA…KNHEEEVKGL (92 aa). S177 carries the post-translational modification Phosphoserine. The segment at 225–248 is linker 12; it reads QAQIASSGLTVEVDAPKSQDLAKI. The interaction with DNAJB6 stretch occupies residues 243–391; the sequence is QDLAKIMADI…RLLEDGEDFN (149 aa). K247 is covalently cross-linked (Glycyl lysine isopeptide (Lys-Gly) (interchain with G-Cter in SUMO2)). The interval 249–387 is coil 2; sequence MADIRAQYDE…ATYRRLLEDG (139 aa). T302 is modified (phosphothreonine). 3 positions are modified to phosphoserine: S305, S319, and S323. Residues K370 and K372 each participate in a glycyl lysine isopeptide (Lys-Gly) (interchain with G-Cter in SUMO2) cross-link. Residues 388 to 430 form a tail region; that stretch reads EDFNLGDALDSSNSMQTIQKTTTRRIVDGKVVSETNDTKVLRH. S398, S399, and S401 each carry phosphoserine. T404 carries the post-translational modification Phosphothreonine. K417 participates in a covalent cross-link: Glycyl lysine isopeptide (Lys-Gly) (interchain with G-Cter in SUMO2). K426 bears the N6-acetyllysine; alternate mark. Residue K426 forms a Glycyl lysine isopeptide (Lys-Gly) (interchain with G-Cter in SUMO1); alternate linkage. K426 participates in a covalent cross-link: Glycyl lysine isopeptide (Lys-Gly) (interchain with G-Cter in SUMO2); alternate.

It belongs to the intermediate filament family. Heterotetramer of two type I and two type II keratins. KRT18 associates with KRT8. Interacts with PLEC isoform 1C, when in a heterodimer with KRT8. Interacts with the thrombin-antithrombin complex. Interacts with PNN and mutated CFTR. Interacts with YWHAE, YWHAH and YWHAZ only when phosphorylated. Interacts with DNAJB6, TCHP and TRADD. Interacts with FAM83H. Interacts with EPPK1. Interacts with PKP1 and PKP2. In terms of assembly, (Microbial infection) Interacts with hepatitis C virus/HCV core protein. Phosphorylation at Ser-34 increases during mitosis. Hyperphosphorylated at Ser-53 in diseased cirrhosis liver. Phosphorylation increases by IL-6. In terms of processing, proteolytically cleaved by caspases during epithelial cell apoptosis. Cleavage occurs at Asp-238 by either caspase-3, caspase-6 or caspase-7. Post-translationally, O-GlcNAcylation increases solubility, and decreases stability by inducing proteasomal degradation. Expressed in colon, placenta, liver and very weakly in exocervix. Increased expression observed in lymph nodes of breast carcinoma.

It is found in the nucleus matrix. Its subcellular location is the cytoplasm. The protein localises to the perinuclear region. It localises to the nucleus. The protein resides in the nucleolus. Its function is as follows. Involved in the uptake of thrombin-antithrombin complexes by hepatic cells. When phosphorylated, plays a role in filament reorganization. Involved in the delivery of mutated CFTR to the plasma membrane. Together with KRT8, is involved in interleukin-6 (IL-6)-mediated barrier protection. This is Keratin, type I cytoskeletal 18 (KRT18) from Homo sapiens (Human).